The sequence spans 276 residues: Ribosomal RNA small subunit methyltransferase A (276 aa).

Residues histidine 15, leucine 17, glycine 42, glutamate 64, aspartate 89, and asparagine 108 each contribute to the S-adenosyl-L-methionine site.

The protein belongs to the class I-like SAM-binding methyltransferase superfamily. rRNA adenine N(6)-methyltransferase family. RsmA subfamily.

Its subcellular location is the cytoplasm. It carries out the reaction adenosine(1518)/adenosine(1519) in 16S rRNA + 4 S-adenosyl-L-methionine = N(6)-dimethyladenosine(1518)/N(6)-dimethyladenosine(1519) in 16S rRNA + 4 S-adenosyl-L-homocysteine + 4 H(+). Functionally, specifically dimethylates two adjacent adenosines (A1518 and A1519) in the loop of a conserved hairpin near the 3'-end of 16S rRNA in the 30S particle. May play a critical role in biogenesis of 30S subunits. The protein is Ribosomal RNA small subunit methyltransferase A of Prochlorococcus marinus (strain MIT 9515).